The chain runs to 1149 residues: Potassium channel subfamily U member 1 (1149 aa).

Residues 1–24 (MFQTKLRNESWEDLQKMSCTTEIQ) lie on the Extracellular side of the membrane. Residues 25-45 (VAFILSSFMTFISGLIILLIF) form a helical membrane-spanning segment. The Cytoplasmic segment spans residues 46–101 (RLIWRTVKKWQIIKGTGIILELFTSGSIRRNHVRSLHFHGRFRDRIEMLLSAQTFV). Residues 102-122 (GQVLVILVFVLSIGSLIIYFI) traverse the membrane as a helical segment. Topologically, residues 123–138 (NSADPVGSCSSYEDKT) are extracellular. Residues 139-159 (IPVDLVFNAFFSFYFGLRFMA) traverse the membrane as a helical segment. Residues 160–163 (ADDK) lie on the Cytoplasmic side of the membrane. Residues 164–184 (IKFWLEMNSIVDIFTIPPTFI) traverse the membrane as a helical segment. Residues 185 to 188 (SYYL) are Extracellular-facing. The chain crosses the membrane as a helical; Voltage-sensor span at residues 189–209 (KSNWLGLRFLRALRLLELPRI). Topologically, residues 210 to 226 (LQILRAIKTSNSVKFSK) are cytoplasmic. A helical membrane pass occupies residues 227–247 (LLSIVLSTWFTAAGFIHLVEN). Over 248 to 259 (SGDPWLKGRNSQ) the chain is Extracellular. An intramembrane region (pore-forming) is located at residues 260 to 282 (NISYFDSVYLVMATTSTVGFGDV). The short motif at 276-279 (TVGF) is the Selectivity for potassium element. The Extracellular portion of the chain corresponds to 283-291 (VAKTSLGRT). Residues 292–312 (FIIFFTLGSLILFANYIPEMV) traverse the membrane as a helical segment. At 313 to 1149 (ELFANKRKYT…EDPFAYSEPL (837 aa)) the chain is on the cytoplasmic side. 2 consecutive RCK N-terminal domains span residues 331 to 473 (KKFI…DNII) and 713 to 884 (RNHI…EGSL). Residues 829–845 (IDSSSDSSPSVSEETAS) show a composition bias toward low complexity. Disordered regions lie at residues 829 to 851 (IDSS…NGHN) and 1106 to 1149 (ARNQ…SEPL). The span at 1106–1120 (ARNQIRTNSSITSQK) shows a compositional bias: polar residues.

Belongs to the potassium channel family. Calcium-activated (TC 1.A.1.3) subfamily. KCa5.1/KCNU1 sub-subfamily. Homotetramer; which constitutes the calcium-activated potassium channel. Interacts with LRRC52; this interaction changes some channel gating properties, such as shifting gating to more negative potentials at a given pH. In terms of tissue distribution, testis-specific.

It is found in the cell membrane. Its subcellular location is the cell projection. The protein localises to the cilium. The protein resides in the flagellum membrane. The enzyme catalyses K(+)(in) = K(+)(out). Regulated by changes in cytosolic pH; activated by alkalization. VU0546110 acts as a selective inhibitor. The auxiliary subunit LRRC52 shifts the activation of KCNU1 to more negative potentials at a given pH. Testis-specific potassium channel activated by both intracellular pH and membrane voltage that mediates export of K(+). Represents the primary spermatozoan K(+) current. The channel underlies a pH-triggered membrane hyperpolarization during the process of sperm capacitation, as sperm encounter the alkaline environment near the ovum in the female reproductive tract, thereby playing an essential for male fertility. In Macaca fascicularis (Crab-eating macaque), this protein is Potassium channel subfamily U member 1 (KCNU1).